We begin with the raw amino-acid sequence, 244 residues long: Phosphoadenosine 5'-phosphosulfate reductase (244 aa).

Cysteine 239 (nucleophile; cysteine thiosulfonate intermediate) is an active-site residue.

It belongs to the PAPS reductase family. CysH subfamily.

The protein localises to the cytoplasm. It carries out the reaction [thioredoxin]-disulfide + sulfite + adenosine 3',5'-bisphosphate + 2 H(+) = [thioredoxin]-dithiol + 3'-phosphoadenylyl sulfate. It functions in the pathway sulfur metabolism; hydrogen sulfide biosynthesis; sulfite from sulfate: step 3/3. Its function is as follows. Catalyzes the formation of sulfite from phosphoadenosine 5'-phosphosulfate (PAPS) using thioredoxin as an electron donor. In Buchnera aphidicola subsp. Acyrthosiphon pisum (strain 5A), this protein is Phosphoadenosine 5'-phosphosulfate reductase.